We begin with the raw amino-acid sequence, 366 residues long: Inactive protein RESTRICTED TEV MOVEMENT 2 (366 aa).

The 108-residue stretch at 14 to 121 (VQYEDFVPKS…LPETSRTEAA (108 aa)) folds into the sHSP domain. An A-1 repeat occupies 129 to 133 (LEEKR). Residues 129-220 (LEEKRLLEES…LEERRLEERK (92 aa)) are 6 X 5 AA repeats A of L-E-E-[SKR]-[ERK]. One copy of the A-2 repeat lies at 135 to 139 (LEESR). The stretch at 156-160 (LEEKE) is one A-3 repeat. One copy of the B-1 repeat lies at 163-176 (IRKLQEEAKAKEEA). The segment at 163–206 (IRKLQEEAKAKEEAEMRKLQEEAKANEEAAAKKLQEEIEAKEKL) is 3 X 14 AA repeats B of [IMA]-[RK]-K-L-Q-E-E-A-K-A-K-E-[EK]-[LA]. The B-2 repeat unit spans residues 178-191 (MRKLQEEAKANEEA). Residues 193–205 (AKKLQEEIEAKEK) form a B-3 repeat. An A-4 repeat occupies 206-210 (LEERK). One copy of the A-5 repeat lies at 211–215 (LEERR). The stretch at 216 to 220 (LEERK) is one A-6 repeat. Residues 322–342 (LMMNVGVAALVIFALGAYVSY) form a helical membrane-spanning segment. The segment at 345 to 366 (CSSSSSSSSSSPSSSSSSTKPE) is disordered. Positions 346-366 (SSSSSSSSSSPSSSSSSTKPE) are enriched in low complexity.

The protein belongs to the small heat shock protein (HSP20) family.

It localises to the cell membrane. Seems to not be involved in heat resistance. Unable to mediate restriction of long-distance movement of the pathogenic tobacco etch virus (TEV) without causing a hypersensitive response or inducing systemic acquired resistance. This Arabidopsis thaliana (Mouse-ear cress) protein is Inactive protein RESTRICTED TEV MOVEMENT 2 (RTM2).